The following is a 1121-amino-acid chain: MDSLWAAIAALFVAAAVVVRGAAAADDAQLLEEFRQAVPNQAALKGWSGGDGACRFPGAGCRNGRLTSLSLAGVPLNAEFRAVAATLLQLGSVEVLSLRGANVSGALSAAGGARCGSKLQALDLSGNAALRGSVADVAALASACGGLKTLNLSGDAVGAAKVGGGGGPGFAGLDSLDLSNNKITDDSDLRWMVDAGVGAVRWLDLALNRISGVPEFTNCSGLQYLDLSGNLIVGEVPGGALSDCRGLKVLNLSFNHLAGVFPPDIAGLTSLNALNLSNNNFSGELPGEAFAKLQQLTALSLSFNHFNGSIPDTVASLPELQQLDLSSNTFSGTIPSSLCQDPNSKLHLLYLQNNYLTGGIPDAVSNCTSLVSLDLSLNYINGSIPASLGDLGNLQDLILWQNELEGEIPASLSRIQGLEHLILDYNGLTGSIPPELAKCTKLNWISLASNRLSGPIPSWLGKLSYLAILKLSNNSFSGPIPPELGDCQSLVWLDLNSNQLNGSIPKELAKQSGKMNVGLIVGRPYVYLRNDELSSECRGKGSLLEFTSIRPDDLSRMPSKKLCNFTRMYVGSTEYTFNKNGSMIFLDLSYNQLDSAIPGELGDMFYLMIMNLGHNLLSGTIPSRLAEAKKLAVLDLSYNQLEGPIPNSFSALSLSEINLSNNQLNGTIPELGSLATFPKSQYENNTGLCGFPLPPCDHSSPRSSNDHQSHRRQASMASSIAMGLLFSLFCIIVIIIAIGSKRRRLKNEEASTSRDIYIDSRSHSATMNSDWRQNLSGTNLLSINLAAFEKPLQNLTLADLVEATNGFHIACQIGSGGFGDVYKAQLKDGKVVAIKKLIHVSGQGDREFTAEMETIGKIKHRNLVPLLGYCKAGEERLLVYDYMKFGSLEDVLHDRKKIGKKLNWEARRKIAVGAARGLAFLHHNCIPHIIHRDMKSSNVLIDEQLEARVSDFGMARLMSVVDTHLSVSTLAGTPGYVPPEYYQSFRCTTKGDVYSYGVVLLELLTGKPPTDSADFGEDNNLVGWVKQHTKLKITDVFDPELLKEDPSVELELLEHLKIACACLDDRPSRRPTMLKVMAMFKEIQAGSTVDSKTSSAAAGSIDEGGYGVLDMPLREAKEEKD.

The N-terminal stretch at 1–24 (MDSLWAAIAALFVAAAVVVRGAAA) is a signal peptide. The Cys pair 1 motif lies at 54 to 61 (CRFPGAGC). LRR repeat units follow at residues 90-114 (LGSV…GGAR), 116-142 (GSKL…ALAS), 144-167 (CGGL…GGGG), 170-193 (FAGL…RWMV), 197-221 (VGAV…NCSG), 223-243 (QYLD…ALSD), 244-268 (CRGL…IAGL), 269-292 (TSLN…AFAK), 294-317 (QQLT…VASL), 318-341 (PELQ…LCQD), 343-367 (NSKL…VSNC), 369-391 (SLVS…LGDL), 392-415 (GNLQ…LSRI), 416-439 (QGLE…LAKC), 441-463 (KLNW…LGKL), 464-487 (SYLA…LGDC), and 489-511 (SLVW…LAKQ). Residue N102 is glycosylated (N-linked (GlcNAc...) asparagine). N151 carries N-linked (GlcNAc...) asparagine glycosylation. Residue N218 is glycosylated (N-linked (GlcNAc...) asparagine). N251, N275, N280, and N307 each carry an N-linked (GlcNAc...) asparagine glycan. N-linked (GlcNAc...) asparagine glycosylation is found at N366 and N381. Residues N473 and N501 are each glycosylated (N-linked (GlcNAc...) asparagine). A brassinolide-binding site is contributed by Y525. The LRR 18 repeat unit spans residues 541-564 (GSLLEFTSIRPDDLSRMPSKKLCN). N-linked (GlcNAc...) asparagine glycosylation occurs at N564. Y569 is a binding site for brassinolide. N-linked (GlcNAc...) asparagine glycosylation is present at N580. LRR repeat units lie at residues 580–603 (NGSM…ELGD), 604–628 (MFYL…LAEA), 629–651 (KKLA…SFSA), and 652–676 (LSLS…SLAT). 3 N-linked (GlcNAc...) asparagine glycosylation sites follow: N658, N665, and N684. The short motif at 689–696 (CGFPLPPC) is the Cys pair 2 element. The disordered stretch occupies residues 693-712 (LPPCDHSSPRSSNDHQSHRR). Residues 719–739 (SIAMGLLFSLFCIIVIIIAIG) traverse the membrane as a helical segment. The Protein kinase domain maps to 807 to 1083 (FHIACQIGSG…LKVMAMFKEI (277 aa)). Residues 813–821 (IGSGGFGDV), K835, 881–883 (DYM), 887–890 (SLED), 933–938 (DMKSSN), and D951 contribute to the ATP site. D933 serves as the catalytic Proton acceptor.

The protein belongs to the protein kinase superfamily. Ser/Thr protein kinase family. As to quaternary structure, interacts with BIP103 and BIP131. Interacts with BAK1. Interacts with BSK3. Interacts with SERK2. In terms of tissue distribution, highly expressed in shoots. Expressed at low levels in roots.

Its subcellular location is the cell membrane. The enzyme catalyses L-seryl-[protein] + ATP = O-phospho-L-seryl-[protein] + ADP + H(+). The catalysed reaction is L-threonyl-[protein] + ATP = O-phospho-L-threonyl-[protein] + ADP + H(+). Receptor kinase involved brassinosteroid (BR) signal transduction. Regulates, in response to BR binding, a signaling cascade involved in plant development, promotion of cell elongation and flowering. Activates BR signaling by targeting and phosphorylating BSK3, a positive regulator of BR signaling. Forms at the plasma membrane a receptor complex with BAK1 which is activated in response to brassinolide. Phosphorylates BAK1. Phosphorylates REM4.1, which reduces REM4.1 binding affinity to BAK1 and allows the formation and subsequent activation of the BRI1-BAK1 receptor complex. Functions in various growth and developmental processes, such as internode elongation, bending of the lamina joint and skotomorphogenesis. Functions in internode elongation by inducing the formation of the intercalary meristem and the longitudinal elongation of internode cells. Involved in organ development through the control of cell division and elongation. Does not seem essential for organ pattern formation or organ initiation. This is Brassinosteroid LRR receptor kinase BRI1 from Oryza sativa subsp. japonica (Rice).